The primary structure comprises 204 residues: Urease accessory protein UreG (204 aa).

11–18 (GPVGAGKT) lines the GTP pocket.

It belongs to the SIMIBI class G3E GTPase family. UreG subfamily. In terms of assembly, homodimer. UreD, UreF and UreG form a complex that acts as a GTP-hydrolysis-dependent molecular chaperone, activating the urease apoprotein by helping to assemble the nickel containing metallocenter of UreC. The UreE protein probably delivers the nickel.

The protein localises to the cytoplasm. In terms of biological role, facilitates the functional incorporation of the urease nickel metallocenter. This process requires GTP hydrolysis, probably effectuated by UreG. The chain is Urease accessory protein UreG from Staphylococcus aureus (strain Mu3 / ATCC 700698).